The following is a 382-amino-acid chain: Heme A synthase (382 aa).

7 helical membrane passes run 37-57 (IRVW…VGGL), 126-146 (VIGV…QVPA), 152-172 (LLFL…MVAS), 188-208 (LATH…YIME), 231-251 (STGL…VAGI), 288-308 (LVQF…VVVW), and 332-352 (LQIV…IAIF). His293 lines the heme pocket. Residue His353 coordinates heme. A helical membrane pass occupies residues 356-376 (LAVIVWVLILRARFLSGYPIA).

Belongs to the COX15/CtaA family. Type 2 subfamily. Interacts with CtaB. Heme b serves as cofactor.

The protein localises to the cell membrane. It carries out the reaction Fe(II)-heme o + 2 A + H2O = Fe(II)-heme a + 2 AH2. It participates in porphyrin-containing compound metabolism; heme A biosynthesis; heme A from heme O: step 1/1. Its function is as follows. Catalyzes the conversion of heme O to heme A by two successive hydroxylations of the methyl group at C8. The first hydroxylation forms heme I, the second hydroxylation results in an unstable dihydroxymethyl group, which spontaneously dehydrates, resulting in the formyl group of heme A. This is Heme A synthase from Roseobacter denitrificans (strain ATCC 33942 / OCh 114) (Erythrobacter sp. (strain OCh 114)).